The primary structure comprises 472 residues: 12S seed storage protein CRA1 (472 aa).

Positions 1 to 24 (MARVSSLLSFCLTLLILFHGYAAQ) are cleaved as a signal peptide. Disulfide bonds link Cys36–Cys69 and Cys112–Cys289. Positions 41 to 236 (LNALEPSHVL…ALKIDLQTAQ (196 aa)) constitute a Cupin type-1 1 domain. Thr115 is subject to Phosphothreonine. The disordered stretch occupies residues 259 to 283 (RPPLRGQRPQEEEEEEGRHGRHGNG). Residues 295–444 (DNLDDPSRAD…GFQISPEEAR (150 aa)) enclose the Cupin type-1 2 domain. Tyr312 carries the post-translational modification Phosphotyrosine. The residue at position 314 (Ser314) is a Phosphoserine. Residues Thr408 and Thr433 each carry the phosphothreonine modification.

This sequence belongs to the 11S seed storage protein (globulins) family. As to quaternary structure, hexamer; each subunit is composed of an acidic and a basic chain derived from a single precursor and linked by a disulfide bond. Phosphorylated in seeds on some Tyr residues in response to abscisic acid (ABA). Post-translationally, proteolytically processed during seed maturation at a conserved Asn-Gly peptide bond by an asparaginyl endopeptidase to produce two mature polypeptides referred to as alpha and beta subunits that are joined together by a disulfide bond. As to expression, accumulates in seeds 8 days after anthesis.

The protein localises to the protein storage vacuole. In terms of biological role, seed storage protein. In Arabidopsis thaliana (Mouse-ear cress), this protein is 12S seed storage protein CRA1 (CRA1).